Reading from the N-terminus, the 322-residue chain is Putative pyruvyl transferase EpsO (322 aa).

The protein belongs to the polysaccharide pyruvyl transferase family.

Its function is as follows. May be involved in the production of the exopolysaccharide (EPS) component of the extracellular matrix during biofilm formation. EPS is responsible for the adhesion of chains of cells into bundles. In Bacillus subtilis (strain 168), this protein is Putative pyruvyl transferase EpsO (epsO).